The sequence spans 218 residues: MIIAIDGPSASGKSSIAKALGSRLGFKFISSGYFYRIITLIAQKFTLNEYDLLSESKILELVLQNDIKFNGVDFLLNGVNVTSHILNERIDLQVSLYSSYIGVRNIVNKKLREIVKLKDDNYIIEGRDITTVVFPEAKVKIYLDASVKVRALRRYNQRDDDITLNELEQALERRDEIDQNKEYGKLKLAKEVFYIDTSYKCLDDVCDIIIKTFNLKKK.

An ATP-binding site is contributed by 7 to 15 (GPSASGKSS).

Belongs to the cytidylate kinase family. Type 1 subfamily.

The protein resides in the cytoplasm. The catalysed reaction is CMP + ATP = CDP + ADP. The enzyme catalyses dCMP + ATP = dCDP + ADP. The protein is Cytidylate kinase of Borrelia hermsii (strain HS1 / DAH).